A 326-amino-acid chain; its full sequence is Aldo-keto reductase family 1 member D1 (326 aa).

NADP(+) contacts are provided by residues 22-26 and Asp-52; that span reads GLGTY. Tyr-26 is a binding site for substrate. 4 residues coordinate substrate: Tyr-57, Trp-88, Glu-119, and Tyr-131. The Proton donor role is filled by Tyr-57. NADP(+) is bound by residues 168–169, Gln-192, and 219–224; these read SN and YSPLGT. Trp-230 serves as a coordination point for substrate. NADP(+) is bound at residue 273 to 283; that stretch reads KSTTPERIKEN.

Belongs to the aldo/keto reductase family. In terms of processing, the N-terminus is blocked.

The protein resides in the cytoplasm. The catalysed reaction is 5beta-cholestan-3-one + NADP(+) = cholest-4-en-3-one + NADPH + H(+). It catalyses the reaction 4,5beta-dihydrocortisone + NADP(+) = cortisone + NADPH + H(+). It carries out the reaction cortisol + NADPH + H(+) = 5beta-dihydrocortisol + NADP(+). The enzyme catalyses corticosterone + NADPH + H(+) = 5beta-dihydrocorticosterone + NADP(+). The catalysed reaction is 7alpha,12alpha-dihydroxycholest-4-en-3-one + NADPH + H(+) = 7alpha,12alpha-dihydroxy-5beta-cholestan-3-one + NADP(+). It catalyses the reaction 7alpha-hydroxycholest-4-en-3-one + NADPH + H(+) = 7alpha-hydroxy-5beta-cholestan-3-one + NADP(+). It carries out the reaction epitestosterone + NADPH + H(+) = 5beta-dihydroepitestosterone + NADP(+). The enzyme catalyses androst-4-ene-3,17-dione + NADPH + H(+) = 5beta-androstane-3,17-dione + NADP(+). The catalysed reaction is progesterone + NADPH + H(+) = 5beta-pregnan-3,20-dione + NADP(+). It catalyses the reaction 21-hydroxyprogesterone + NADPH + H(+) = 5beta-dihydrodeoxycorticosterone + NADP(+). It carries out the reaction aldosterone + NADPH + H(+) = 5beta-dihydroaldosterone + NADP(+). The enzyme catalyses 17beta-hydroxyandrosta-1,4-dien-3-one + NADPH + H(+) = 17beta-hydroxy-5beta-androst-1-en-3-one + NADP(+). The catalysed reaction is 17beta-hydroxyestr-4-en-3-one + NADPH + H(+) = 17beta-hydroxy-5beta-estran-3-one + NADP(+). It catalyses the reaction 5beta-dihydrotestosterone + NADP(+) = testosterone + NADPH + H(+). It carries out the reaction androst-4-ene-3,11,17-trione + NADPH + H(+) = 17beta-hydroxyandrost-4-ene-3,11-dione + NADP(+). Subject to inhibition by high substrate concentrations. Inhibited by testosterone concentrations above 10 uM. Inhibited by the primary and secondary bile acids chenodeoxycholic acid and ursodeoxycholic acid. In terms of biological role, catalyzes the stereospecific NADPH-dependent reduction of the C4-C5 double bond of bile acid intermediates and steroid hormones carrying a delta(4)-3-one structure to yield an A/B cis-ring junction. This cis-configuration is crucial for bile acid biosynthesis and plays important roles in steroid metabolism. Capable of reducing a broad range of delta-(4)-3-ketosteroids from C18 (such as, 17beta-hydroxyestr-4-en-3-one) to C27 (such as, 7alpha-hydroxycholest-4-en-3-one). The sequence is that of Aldo-keto reductase family 1 member D1 (Akr1d1) from Rattus norvegicus (Rat).